We begin with the raw amino-acid sequence, 300 residues long: 33 kDa chaperonin (300 aa).

2 cysteine pairs are disulfide-bonded: C247/C249 and C280/C283.

The protein belongs to the HSP33 family. In terms of processing, under oxidizing conditions two disulfide bonds are formed involving the reactive cysteines. Under reducing conditions zinc is bound to the reactive cysteines and the protein is inactive.

It localises to the cytoplasm. Functionally, redox regulated molecular chaperone. Protects both thermally unfolding and oxidatively damaged proteins from irreversible aggregation. Plays an important role in the bacterial defense system toward oxidative stress. This chain is 33 kDa chaperonin, found in Prochlorococcus marinus (strain MIT 9515).